Reading from the N-terminus, the 599-residue chain is Group II intron-encoded protein LtrA (599 aa).

The region spanning 70-361 (IIQSLKDGTY…QPARFLGYDI (292 aa)) is the Reverse transcriptase domain. Residues 381 to 549 (NGSVELLIPL…AKCCELCGTS (169 aa)) are intron maturase type-2.

The protein in the N-terminal section; belongs to the bacterial reverse transcriptase family. As to quaternary structure, homodimer. Mg(2+) is required as a cofactor.

The catalysed reaction is DNA(n) + a 2'-deoxyribonucleoside 5'-triphosphate = DNA(n+1) + diphosphate. In terms of biological role, multifunctional protein that promotes group II intron splicing and mobility by acting both on RNA and DNA. It has three activities: reverse transcriptase (RT) for intron duplication, maturase to promote splicing, and DNA endonuclease for site-specific cleavage of recipient alleles. The intron-encoded protein promotes splicing by facilitating the formation of the catalytically active structure of the intron RNA. After splicing, the protein remains bound to the excised intron lariat RNA, forming ribonucleoprotein particles, and cleaving the antisense strand of the recipient DNA in the 3' exon. After DNA cleavage, retrohoming occurs by a target DNA-primed reverse transcription of the intron RNA that had reverse spliced into the sense strand of the recipient DNA. It also contributes to the recognition of the DNA target site and acts as a repressor of its own translation. The protein is Group II intron-encoded protein LtrA (ltrA) of Lactococcus lactis subsp. cremoris (Streptococcus cremoris).